Here is a 604-residue protein sequence, read N- to C-terminus: MKSTIITSILFSVATVQAYSPAEQIDVQSHLLSDPTKVEGKTYDYVIAGGGLTGLTVASKLSENPKIKVLVIEKGFYESNDGPIIEDPNAYGEIFGTSVDQNYLTVPLINNRTGEIKSGLGLGGSTLINGDSWTRPDKVQIDSWEKVFGMEGWNWDNVFQYMQKAERSRPPTAAQIEAGHFYDPACHGTDGTVHAGPRDNGKPWSPLMRALMNTVSAFGVPVQKDFHCGHPRGVSMIPNNLHENQIRADAAREWLLPNYQRDNLQILTGQKVGKVLFNQTASGPKAVGVNFGTNKAVNFNVYAKQEVLLAAGSAISPLILEYSGIGIKSVLDKAGVKQLLELPVGLNMQDQTTTTVRSRANNAPGQGQAAYFANFTEVLGDHAAQGINLLDTKLDQWAEETVARGGFHNVTALKIQYENYRNWLLDEDVAFAELFFDTEGKINFDIWNLIPFTRGSVHILSSDPYLWQYANDPKFFMNELDLLGQAAATKLGRELSSAGEMKKYYAGETIPGDNLPQDATVEQWEDYVMMNFRPNWHAVSTCSMMSRELGGVVDATAKVYGTQGLRVIDGSIPPTQVSSHVMTVFYGMALRIAESVLEDYAKSA.

A signal peptide spans 1–18 (MKSTIITSILFSVATVQA). FAD contacts are provided by Leu52, Thr53, and Glu73. An N-linked (GlcNAc...) asparagine glycan is attached at Asn111. Ser125, Asn129, Gly130, and Ser132 together coordinate FAD. Cysteines 186 and 228 form a disulfide. A glycan (N-linked (GlcNAc...) asparagine) is linked at Asn213. Val272 provides a ligand contact to FAD. 3 N-linked (GlcNAc...) asparagine glycosylation sites follow: Asn278, Asn409, and Asn531. The active-site Proton acceptor is His537. O2 contacts are provided by Lys558 and Val559. The FAD site is built by Gly570 and Met582.

The protein belongs to the GMC oxidoreductase family. As to quaternary structure, homodimer. Requires FAD as cofactor.

It localises to the secreted. Its subcellular location is the cell wall. The protein localises to the cytoplasm. It is found in the extracellular space. The protein resides in the extracellular matrix. It catalyses the reaction beta-D-glucose + O2 = D-glucono-1,5-lactone + H2O2. Its function is as follows. Glucose oxidase catalyzes the oxidation of beta-D-glucose to D-glucono-delta-lactone and hydrogen peroxide in the presence of molecular oxygen. The enzyme also catalyzes the reaction with D-xylose but at a much lower rate. Shows any activities against D-fructose, D-galactose and D-arabinose. The enzyme is cytotoxic for a series of bacteria, yeasts and filamentous fungi and acts primarily via the liberation of H(2)O(2), which is a harmful oxidative stress-generating agent. The protein is Glucose oxidase of Penicillium chrysogenum (Penicillium notatum).